The sequence spans 319 residues: Glutathione synthetase (319 aa).

An ATP-grasp domain is found at 125–311; the sequence is EKLFATLFPQ…IGGLLMDAIE (187 aa). 151-208 contributes to the ATP binding site; that stretch reads FAEQQGDVILKPLDGMGGASIFRHRAGDPNLSVILETLTAHGTQQIMAQGYLPAIKDG. Residues Glu282 and Asn284 each coordinate Mg(2+).

It belongs to the prokaryotic GSH synthase family. Mg(2+) serves as cofactor. It depends on Mn(2+) as a cofactor.

The catalysed reaction is gamma-L-glutamyl-L-cysteine + glycine + ATP = glutathione + ADP + phosphate + H(+). It participates in sulfur metabolism; glutathione biosynthesis; glutathione from L-cysteine and L-glutamate: step 2/2. The sequence is that of Glutathione synthetase from Pseudomonas syringae pv. tomato (strain ATCC BAA-871 / DC3000).